A 708-amino-acid polypeptide reads, in one-letter code: O-antigen chain terminator bifunctional methyltransferase/kinase WbdD (708 aa).

Residues 1–210 (MTKDLNTLVS…VPRPMYLVSN (210 aa)) form a methyltransferase region. S-adenosyl-L-methionine is bound by residues 16–17 (YQ), arginine 36, glycine 61, 82–87 (DFQQEN), 108–111 (GRIE), and leucine 128. The interval 211–459 (HRVLINDFNQ…AKLPSAEQQR (249 aa)) is kinase. Residues proline 229, histidine 237, 241-243 (RRY), lysine 252, glutamate 274, 309-311 (EKL), methionine 358, and aspartate 369 contribute to the ATP site. A coiled-coil region spans residues 485 to 594 (AGSEALRGQI…EIEKIHRSRS (110 aa)). Positions 601-669 (YRYLGLQIHL…RLYRRMNPLP (69 aa)) are required for membrane-binding. The segment at 687–708 (VMHPELLPPEVYEIYLKLTKNK) is required for localizing WbdA to the membrane.

The protein belongs to the WbdD family. As to quaternary structure, interacts with WbdA.

It localises to the cell inner membrane. It carries out the reaction 3-O-phospho-alpha-D-Man-(1-&gt;2)-alpha-D-Man-(1-&gt;2)-[alpha-D-Man-(1-&gt;3)-alpha-D-Man-(1-&gt;3)-alpha-D-Man-(1-&gt;2)-alpha-D-Man-(1-&gt;2)](n)-alpha-D-Man-(1-&gt;3)-alpha-D-Man-(1-&gt;3)-alpha-D-Man-(1-&gt;3)-alpha-D-GlcNAc-di-trans,octa-cis-undecaprenyl diphosphate + S-adenosyl-L-methionine = 3-O-methylphospho-alpha-D-Man-(1-&gt;2)-alpha-D-Man-(1-&gt;2)-[alpha-D-Man-(1-&gt;3)-alpha-D-Man-(1-&gt;3)-alpha-D-Man-(1-&gt;2)-alpha-D-Man-(1-&gt;2)](n)-alpha-D-Man-(1-&gt;3)-alpha-D-Man-(1-&gt;3)-alpha-D-Man-(1-&gt;3)-alpha-D-GlcNAc-di-trans,octa-cis-undecaprenyl diphosphate + S-adenosyl-L-homocysteine. The enzyme catalyses alpha-D-Man-(1-&gt;2)-alpha-D-Man-(1-&gt;2)-[alpha-D-Man-(1-&gt;3)-alpha-D-Man-(1-&gt;3)-alpha-D-Man-(1-&gt;2)-alpha-D-Man-(1-&gt;2)](n)-alpha-D-Man-(1-&gt;3)-alpha-D-Man-(1-&gt;3)-alpha-D-Man-(1-&gt;3)-alpha-D-GlcNAc-di-trans,octa-cis-undecaprenyl diphosphate + ATP = 3-O-phospho-alpha-D-Man-(1-&gt;2)-alpha-D-Man-(1-&gt;2)-[alpha-D-Man-(1-&gt;3)-alpha-D-Man-(1-&gt;3)-alpha-D-Man-(1-&gt;2)-alpha-D-Man-(1-&gt;2)](n)-alpha-D-Man-(1-&gt;3)-alpha-D-Man-(1-&gt;3)-alpha-D-Man-(1-&gt;3)-alpha-D-GlcNAc-di-trans,octa-cis-undecaprenyl diphosphate + ADP + H(+). The protein operates within bacterial outer membrane biogenesis; LPS O-antigen biosynthesis. In terms of biological role, regulates the length of the LPS O-antigen polysaccharide chain. Stops the polymerization of the chain by phosphorylating and then methylating the phosphate on the terminal sugar. This terminal modification is essential for export of the O-antigen across the inner membrane. WbdD is also required for correct localization of the WbdA mannosyltransferase. This is O-antigen chain terminator bifunctional methyltransferase/kinase WbdD from Escherichia coli.